Consider the following 526-residue polypeptide: Radial spoke head protein 6 homolog A (526 aa).

Disordered stretches follow at residues 180–231, 371–411, and 469–526; these read EGED…EENG, VKSE…DAEI, and PPAP…EEDD. 2 stretches are compositionally biased toward acidic residues: residues 181–212 and 374–395; these read GEDDEAEEGGEEEEKGEVEDDVEEEENEEAED and EEEEDEEEAEEEEKEEENEPEP. Residues 497–506 show a composition bias toward basic and acidic residues; that stretch reads QALKAAKEEA. A compositionally biased stretch (acidic residues) spans 507–526; that stretch reads EAAAEEMEEEEDEEEEEEDD.

This sequence belongs to the flagellar radial spoke RSP4/6 family. As to quaternary structure, component of sperm axonemal radial spoke complexes.

Its subcellular location is the cytoplasm. It is found in the cytoskeleton. It localises to the flagellum axoneme. In terms of biological role, functions as part of radial spoke complexes in the axoneme of sperm flagella that play an important part in motility. The triple radial spokes (RS1, RS2 and RS3) are required to modulate beating of the sperm flagellum. This is Radial spoke head protein 6 homolog A (rsph6a) from Xenopus tropicalis (Western clawed frog).